The primary structure comprises 202 residues: Outer-membrane lipoprotein carrier protein (202 aa).

An N-terminal signal peptide occupies residues 1-18 (MNRLFLILLLIFSHEVFS).

This sequence belongs to the LolA family. As to quaternary structure, monomer.

It is found in the periplasm. Functionally, participates in the translocation of lipoproteins from the inner membrane to the outer membrane. Only forms a complex with a lipoprotein if the residue after the N-terminal Cys is not an aspartate (The Asp acts as a targeting signal to indicate that the lipoprotein should stay in the inner membrane). This is Outer-membrane lipoprotein carrier protein from Legionella pneumophila (strain Lens).